The chain runs to 270 residues: Indole-3-glycerol phosphate synthase (270 aa).

The protein belongs to the TrpC family.

It catalyses the reaction 1-(2-carboxyphenylamino)-1-deoxy-D-ribulose 5-phosphate + H(+) = (1S,2R)-1-C-(indol-3-yl)glycerol 3-phosphate + CO2 + H2O. The protein operates within amino-acid biosynthesis; L-tryptophan biosynthesis; L-tryptophan from chorismate: step 4/5. This Salinibacter ruber (strain DSM 13855 / M31) protein is Indole-3-glycerol phosphate synthase.